Reading from the N-terminus, the 268-residue chain is Shikimate dehydrogenase (NADP(+)) (268 aa).

Shikimate-binding positions include 13–15 (SLS) and Thr-60. The active-site Proton acceptor is Lys-64. NADP(+) is bound at residue Glu-76. The shikimate site is built by Asn-85 and Asp-100. Residues 124–128 (GAGGA), 148–153 (NRTMAR), and Ile-209 each bind NADP(+). Residue Tyr-211 participates in shikimate binding. Gly-232 is an NADP(+) binding site.

It belongs to the shikimate dehydrogenase family. As to quaternary structure, homodimer.

The enzyme catalyses shikimate + NADP(+) = 3-dehydroshikimate + NADPH + H(+). The protein operates within metabolic intermediate biosynthesis; chorismate biosynthesis; chorismate from D-erythrose 4-phosphate and phosphoenolpyruvate: step 4/7. Its function is as follows. Involved in the biosynthesis of the chorismate, which leads to the biosynthesis of aromatic amino acids. Catalyzes the reversible NADPH linked reduction of 3-dehydroshikimate (DHSA) to yield shikimate (SA). The polypeptide is Shikimate dehydrogenase (NADP(+)) (Staphylococcus aureus (strain MRSA252)).